Reading from the N-terminus, the 271-residue chain is Type II restriction enzyme ScrFI (271 aa).

It catalyses the reaction Endonucleolytic cleavage of DNA to give specific double-stranded fragments with terminal 5'-phosphates.. In terms of biological role, a P subtype restriction enzyme that recognizes the double-stranded sequence 5'-CCNGG-3' and cleaves after C-2. The sequence is that of Type II restriction enzyme ScrFI from Lactococcus lactis subsp. cremoris (Streptococcus cremoris).